A 359-amino-acid chain; its full sequence is 3-dehydroquinate synthase (359 aa).

Residues 71-76 (DGEAHK), 105-109 (GVIGD), 129-130 (TT), Lys-142, Lys-151, and 169-172 (TLHT) contribute to the NAD(+) site. The Zn(2+) site is built by Glu-184, His-247, and His-264.

The protein belongs to the sugar phosphate cyclases superfamily. Dehydroquinate synthase family. Co(2+) serves as cofactor. Requires Zn(2+) as cofactor. The cofactor is NAD(+).

Its subcellular location is the cytoplasm. The enzyme catalyses 7-phospho-2-dehydro-3-deoxy-D-arabino-heptonate = 3-dehydroquinate + phosphate. Its pathway is metabolic intermediate biosynthesis; chorismate biosynthesis; chorismate from D-erythrose 4-phosphate and phosphoenolpyruvate: step 2/7. In terms of biological role, catalyzes the conversion of 3-deoxy-D-arabino-heptulosonate 7-phosphate (DAHP) to dehydroquinate (DHQ). The protein is 3-dehydroquinate synthase of Neisseria gonorrhoeae (strain ATCC 700825 / FA 1090).